A 245-amino-acid chain; its full sequence is Probable inactive carboxylesterase Os04g0669700 (245 aa).

Residues Ser-115 and His-201 each act as charge relay system in the active site.

This sequence belongs to the AB hydrolase superfamily. AB hydrolase 2 family.

The polypeptide is Probable inactive carboxylesterase Os04g0669700 (Oryza sativa subsp. japonica (Rice)).